We begin with the raw amino-acid sequence, 93 residues long: Small ribosomal subunit protein uS19 (93 aa).

The protein belongs to the universal ribosomal protein uS19 family.

In terms of biological role, protein S19 forms a complex with S13 that binds strongly to the 16S ribosomal RNA. This chain is Small ribosomal subunit protein uS19, found in Helicobacter acinonychis (strain Sheeba).